Here is a 606-residue protein sequence, read N- to C-terminus: WD repeat-containing protein 1 (606 aa).

13 WD repeats span residues 4–45 (EIKK…LRNI), 48–87 (PAVADIYTEHAHQVVVAKYAPSGFYIASGDISGKLRIWDT), 93–135 (ILKY…LWDT), 138–176 (SVGEITGHNKVINSVDIKQNRPYRLATGSDDNCAAFFEG), 180–218 (KFKFTIGDHSRFVNCVRFSPDGNRFATASADGQIFIYDG), 224–263 (VCALGGSKAHDGGIYAISWSPDSTHLLSASGDKTSKIWDV), 270–306 (STFPMGSNVLDQQLGCLWQKDHLLSISLSGYINYLDK), 311–351 (KPLR…YWDS), 358–408 (SFSG…KLDV), 432–474 (LKDQ…VYSI), 480–518 (KDEGKLLEAKGPVTDLAYSHDGAFLAVCDASKVVTVFSV), 523–561 (SENNVFYGHHAKIVCLAWSPDNEHFASGGMDMMVYVWTL), and 566–604 (TKVKIQDAHRLHHVSSLAWLDEHTLVTTSHDASVKEWTI). Lys28, Lys81, Lys95, and Lys115 each carry N6-acetyllysine. Tyr238 is modified (phosphotyrosine). N6-acetyllysine is present on Lys480.

Belongs to the WD repeat AIP1 family.

It is found in the cytoplasm. The protein localises to the cytoskeleton. It localises to the cell projection. Its subcellular location is the podosome. Induces disassembly of actin filaments in conjunction with ADF/cofilin family proteins. Enhances cofilin-mediated actin severing. Involved in cytokinesis. Involved in chemotactic cell migration by restricting lamellipodial membrane protrusions. Involved in myocardium sarcomere organization. Required for cardiomyocyte growth and maintenance. Involved in megakaryocyte maturation and platelet shedding. Required for the establishment of planar cell polarity (PCP) during follicular epithelium development and for cell shape changes during PCP; the function seems to implicate cooperation with CFL1 and/or DSTN/ADF. Involved in the generation/maintenance of cortical tension. Involved in assembly and maintenance of epithelial apical cell junctions and plays a role in the organization of the perijunctional actomyosin belt. The polypeptide is WD repeat-containing protein 1 (Wdr1) (Rattus norvegicus (Rat)).